The following is a 418-amino-acid chain: Putative ion-transport protein YfeO (418 aa).

Helical transmembrane passes span 10–30 (LLLSLPAVAIGIASSLILIVV), 54–74 (DSPLWIIGVLTLTGIAVGLVI), 99–119 (ALPGLIVALILGLAGGVSLGP), 120–140 (EHPIMTVNIALAVAIGARLLP), 149–169 (ILASAGTIGALFGTPVAAALI), 186–206 (LFAPLMAAAAGALTTGLFFHP), 223–243 (ILSGAIVAAIAIAAGMVAVWC), 258–278 (VLVLGIGGFILGILGVIGGPV), 300–320 (DYFLLAVIKLAALVVAAASGF), 322–342 (GGRIFPAVFVGVALGLMLHEH), 343–363 (VPAVPAAITVSCAILGIVLVV), and 371–391 (LFMAAVVVPNTTLLPLLCIVM).

This sequence belongs to the chloride channel (TC 2.A.49) family.

The protein resides in the cell membrane. The chain is Putative ion-transport protein YfeO from Escherichia coli O9:H4 (strain HS).